The sequence spans 387 residues: Probable serine/threonine-protein kinase PBL18 (387 aa).

Residues 1 to 37 (MGNCLDSSARVGNRESTFGGSSRISRKPNQSSRLSSL) are disordered. The N-myristoyl glycine moiety is linked to residue G2. C4 carries the S-palmitoyl cysteine lipid modification. Residues 14–37 (RESTFGGSSRISRKPNQSSRLSSL) show a composition bias toward polar residues. At T73 the chain carries Phosphothreonine. The Protein kinase domain maps to 84-365 (FKPNSMIGEG…ADVLSTLQQL (282 aa)). Residues 90 to 98 (IGEGGFGCV) and K122 each bind ATP. Y167 carries the post-translational modification Phosphotyrosine. D215 functions as the Proton acceptor in the catalytic mechanism. Phosphoserine is present on S219. Residues T250 and T255 each carry the phosphothreonine modification. Y263 is modified (phosphotyrosine). A disordered region spans residues 368 to 387 (SSKKMGSTQNIVMSPSSHMS).

The protein belongs to the protein kinase superfamily. Ser/Thr protein kinase family.

The protein localises to the cell membrane. The catalysed reaction is L-seryl-[protein] + ATP = O-phospho-L-seryl-[protein] + ADP + H(+). It carries out the reaction L-threonyl-[protein] + ATP = O-phospho-L-threonyl-[protein] + ADP + H(+). Functionally, may be involved in plant defense signaling. This is Probable serine/threonine-protein kinase PBL18 from Arabidopsis thaliana (Mouse-ear cress).